The primary structure comprises 105 residues: uncharacterized protein (105 aa).

This sequence to C.jejuni CJ1463.

This is an uncharacterized protein from Helicobacter pylori (strain ATCC 700392 / 26695) (Campylobacter pylori).